A 529-amino-acid polypeptide reads, in one-letter code: Glucose-6-phosphate isomerase (529 aa).

Glu-322 (proton donor) is an active-site residue. Active-site residues include His-351 and Lys-455.

Belongs to the GPI family.

The protein resides in the cytoplasm. The enzyme catalyses alpha-D-glucose 6-phosphate = beta-D-fructose 6-phosphate. It participates in carbohydrate biosynthesis; gluconeogenesis. Its pathway is carbohydrate degradation; glycolysis; D-glyceraldehyde 3-phosphate and glycerone phosphate from D-glucose: step 2/4. Catalyzes the reversible isomerization of glucose-6-phosphate to fructose-6-phosphate. The chain is Glucose-6-phosphate isomerase from Cyanothece sp. (strain PCC 7425 / ATCC 29141).